Here is a 1027-residue protein sequence, read N- to C-terminus: 2-oxoglutarate dehydrogenase, mitochondrial (1027 aa).

Arginine 315, aspartate 413, asparagine 446, isoleucine 448, and glutamine 674 together coordinate thiamine diphosphate. Residues aspartate 413, asparagine 446, and isoleucine 448 each contribute to the Mg(2+) site.

The protein belongs to the alpha-ketoglutarate dehydrogenase family. In terms of assembly, homodimer. Component of the 2-oxoglutarate dehydrogenase complex. Requires thiamine diphosphate as cofactor. Mg(2+) is required as a cofactor.

The protein localises to the mitochondrion matrix. The catalysed reaction is N(6)-[(R)-lipoyl]-L-lysyl-[protein] + 2-oxoglutarate + H(+) = N(6)-[(R)-S(8)-succinyldihydrolipoyl]-L-lysyl-[protein] + CO2. Its function is as follows. The 2-oxoglutarate dehydrogenase complex catalyzes the overall conversion of 2-oxoglutarate to succinyl-CoA and CO(2). It contains multiple copies of three enzymatic components: 2-oxoglutarate dehydrogenase (E1), dihydrolipoamide succinyltransferase (E2) and lipoamide dehydrogenase (E3). This Caenorhabditis briggsae protein is 2-oxoglutarate dehydrogenase, mitochondrial (ogdh-1).